Here is a 365-residue protein sequence, read N- to C-terminus: uncharacterized protein (365 aa).

The next 3 membrane-spanning stretches (helical) occupy residues 105-125 (TGNWFLVILFLALLWLRQCWL), 151-171 (ILTTLVTVGTTLGTPVFSLTI), and 187-207 (IFLIIFSVFSISLGLVSSLIF).

Its subcellular location is the cell membrane. This is an uncharacterized protein from Mycoplasma genitalium (strain ATCC 33530 / DSM 19775 / NCTC 10195 / G37) (Mycoplasmoides genitalium).